Here is a 482-residue protein sequence, read N- to C-terminus: 23S rRNA (uracil(1939)-C(5))-methyltransferase RlmD (482 aa).

[4Fe-4S] cluster-binding residues include Cys85, Cys95, Cys98, and Cys177. S-adenosyl-L-methionine is bound by residues Gln285, Phe314, Asn319, Glu335, Asn370, and Asp391. The Nucleophile role is filled by Cys438.

The protein belongs to the class I-like SAM-binding methyltransferase superfamily. RNA M5U methyltransferase family. RlmD subfamily.

It catalyses the reaction uridine(1939) in 23S rRNA + S-adenosyl-L-methionine = 5-methyluridine(1939) in 23S rRNA + S-adenosyl-L-homocysteine + H(+). Functionally, catalyzes the formation of 5-methyl-uridine at position 1939 (m5U1939) in 23S rRNA. This Acidovorax sp. (strain JS42) protein is 23S rRNA (uracil(1939)-C(5))-methyltransferase RlmD.